A 270-amino-acid polypeptide reads, in one-letter code: L-aspartate dehydrogenase (270 aa).

Residues A123 and N191 each coordinate NAD(+). The active site involves H221.

The protein belongs to the L-aspartate dehydrogenase family.

It carries out the reaction L-aspartate + NADP(+) + H2O = oxaloacetate + NH4(+) + NADPH + H(+). The catalysed reaction is L-aspartate + NAD(+) + H2O = oxaloacetate + NH4(+) + NADH + H(+). The protein operates within cofactor biosynthesis; NAD(+) biosynthesis; iminoaspartate from L-aspartate (dehydrogenase route): step 1/1. Specifically catalyzes the NAD or NADP-dependent dehydrogenation of L-aspartate to iminoaspartate. This is L-aspartate dehydrogenase from Methanocella arvoryzae (strain DSM 22066 / NBRC 105507 / MRE50).